The following is a 214-amino-acid chain: Putative pit accessory protein (214 aa).

This sequence belongs to the UPF0111 family.

Could be involved in orthophosphate transport. The chain is Putative pit accessory protein from Rhizobium meliloti (strain 1021) (Ensifer meliloti).